Here is a 542-residue protein sequence, read N- to C-terminus: Protein MGF 505-11L (542 aa).

The protein belongs to the asfivirus MGF 505 family.

Plays a role in virus cell tropism, and may be required for efficient virus replication in macrophages. This is Protein MGF 505-11L from Ornithodoros (relapsing fever ticks).